Here is a 117-residue protein sequence, read N- to C-terminus: Large ribosomal subunit protein bL20 (117 aa).

It belongs to the bacterial ribosomal protein bL20 family.

Binds directly to 23S ribosomal RNA and is necessary for the in vitro assembly process of the 50S ribosomal subunit. It is not involved in the protein synthesizing functions of that subunit. The sequence is that of Large ribosomal subunit protein bL20 from Mesomycoplasma hyopneumoniae (strain J / ATCC 25934 / NCTC 10110) (Mycoplasma hyopneumoniae).